Here is a 264-residue protein sequence, read N- to C-terminus: Indole-3-glycerol phosphate synthase (264 aa).

Belongs to the TrpC family.

The catalysed reaction is 1-(2-carboxyphenylamino)-1-deoxy-D-ribulose 5-phosphate + H(+) = (1S,2R)-1-C-(indol-3-yl)glycerol 3-phosphate + CO2 + H2O. It participates in amino-acid biosynthesis; L-tryptophan biosynthesis; L-tryptophan from chorismate: step 4/5. The sequence is that of Indole-3-glycerol phosphate synthase from Stenotrophomonas maltophilia (strain K279a).